The following is a 285-amino-acid chain: Phospholipid phosphatase 1 (285 aa).

Over 1–6 (MFDKTR) the chain is Cytoplasmic. Positions 5–7 (TRL) match the PDZ-binding; involved in localization to the apical cell membrane motif. A helical membrane pass occupies residues 7-27 (LPYVALDVLCVLLAGLPFAIL). The Extracellular portion of the chain corresponds to 28-53 (TSRHTPFQRGLFCNDESIKYPYKEDT). Residues 54–74 (IPYPLLGGIIIPFSIIVMIVG) traverse the membrane as a helical segment. The Cytoplasmic segment spans residues 75 to 94 (ETLSVYFNLLHSNSFIRNNY). A helical transmembrane segment spans residues 95-115 (IATIYKAIGTFLFGAAASQSL). Over 116-164 (TDIAKYSIGRLRPHFLDVCDPDWSKINCSDGYIENYICRGNAQKVKEGR) the chain is Extracellular. The interval 120-128 (KYSIGRLRP) is phosphatase sequence motif I. A glycan (N-linked (GlcNAc...) asparagine) is linked at N142. Residues 165 to 185 (LSFYSGHSSFSMYCMLFVALY) form a helical membrane-spanning segment. The interval 168–171 (YSGH) is phosphatase sequence motif II. H171 acts as the Proton donors in catalysis. Topologically, residues 186–196 (LQARMKGDWAR) are cytoplasmic. Residues 197-216 (LLRPTLQFGLVAVSIYVGLS) traverse the membrane as a helical segment. A phosphatase sequence motif III region spans residues 216 to 227 (SRVSDYKHHWSD). Residues 217 to 229 (RVSDYKHHWSDVL) lie on the Extracellular side of the membrane. H223 acts as the Nucleophile in catalysis. The helical transmembrane segment at 230–250 (TGLIQGALVAIVVAVYVSDFF) threads the bilayer. Residues 251–285 (KERNSPFKERKEEDSHTTLHETPTTGNHYRNSHQP) are Cytoplasmic-facing. The span at 257–269 (FKERKEEDSHTTL) shows a compositional bias: basic and acidic residues. A disordered region spans residues 257 to 285 (FKERKEEDSHTTLHETPTTGNHYRNSHQP). Polar residues predominate over residues 270–285 (HETPTTGNHYRNSHQP).

The protein belongs to the PA-phosphatase related phosphoesterase family. Forms functional homodimers and homooligomers that are not required for substrate recognition and catalytic activity. Can also form heterooligomers with PLPP2 and PLPP3. In terms of processing, N-glycosylated. N-linked sugars are of the complex type. N-glycosylation is not required for the phosphatase activity.

The protein localises to the cell membrane. It is found in the apical cell membrane. The protein resides in the membrane raft. Its subcellular location is the membrane. It localises to the caveola. It carries out the reaction a 1,2-diacyl-sn-glycero-3-phosphate + H2O = a 1,2-diacyl-sn-glycerol + phosphate. It catalyses the reaction 1,2-dihexadecanoyl-sn-glycero-3-phosphate + H2O = 1,2-dihexadecanoyl-sn-glycerol + phosphate. The enzyme catalyses 1,2-di-(9Z-octadecenoyl)-sn-glycero-3-phosphate + H2O = 1,2-di-(9Z-octadecenoyl)-sn-glycerol + phosphate. The catalysed reaction is a monoacyl-sn-glycero-3-phosphate + H2O = a monoacylglycerol + phosphate. It carries out the reaction (9Z)-octadecenoyl-sn-glycero-3-phosphate + H2O = (9Z-octadecenoyl)-glycerol + phosphate. It catalyses the reaction a 1-acyl-sn-glycero-3-phosphate + H2O = a 1-acyl-sn-glycerol + phosphate. The enzyme catalyses 1-(9Z-octadecenoyl)-sn-glycero-3-phosphate + H2O = 1-(9Z-octadecenoyl)-sn-glycerol + phosphate. The catalysed reaction is a 1,2-diacyl-sn-glycerol 3-diphosphate + H2O = a 1,2-diacyl-sn-glycero-3-phosphate + phosphate + H(+). It carries out the reaction sphing-4-enine 1-phosphate + H2O = sphing-4-enine + phosphate. It catalyses the reaction an N-acylsphing-4-enine 1-phosphate + H2O = an N-acylsphing-4-enine + phosphate. The enzyme catalyses N-(octanoyl)-sphing-4-enine-1-phosphate + H2O = N-octanoylsphing-4-enine + phosphate. The catalysed reaction is N-(9Z-octadecenoyl)-ethanolamine phosphate + H2O = N-(9Z-octadecenoyl) ethanolamine + phosphate. It carries out the reaction 1-hexadecanoyl-2-(9Z-octadecenoyl)-sn-glycero-3-phosphate + H2O = 1-hexadecanoyl-2-(9Z-octadecenoyl)-sn-glycerol + phosphate. The protein operates within lipid metabolism; phospholipid metabolism. Magnesium-independent phospholipid phosphatase. Insensitive to N-ethylmaleimide. In terms of biological role, magnesium-independent phospholipid phosphatase of the plasma membrane that catalyzes the dephosphorylation of a variety of glycerolipid and sphingolipid phosphate esters including phosphatidate/PA, lysophosphatidate/LPA, diacylglycerol pyrophosphate/DGPP, sphingosine 1-phosphate/S1P and ceramide 1-phosphate/C1P. Also acts on N-oleoyl ethanolamine phosphate/N-(9Z-octadecenoyl)-ethanolamine phosphate, a potential physiological compound. Through its extracellular phosphatase activity allows both the hydrolysis and the cellular uptake of these bioactive lipid mediators from the milieu, regulating signal transduction in different cellular processes. It is for instance essential for the extracellular hydrolysis of S1P and subsequent conversion into intracellular S1P. Involved in the regulation of inflammation, platelets activation, cell proliferation and migration among other processes. May also have an intracellular activity to regulate phospholipid-mediated signaling pathways. The sequence is that of Phospholipid phosphatase 1 from Sus scrofa (Pig).